We begin with the raw amino-acid sequence, 274 residues long: DNA damage-inducible protein D (274 aa).

This chain is DNA damage-inducible protein D (dinD), found in Escherichia coli (strain K12).